The chain runs to 345 residues: Phenylalanine--tRNA ligase alpha subunit (345 aa).

E253 lines the Mg(2+) pocket.

Belongs to the class-II aminoacyl-tRNA synthetase family. Phe-tRNA synthetase alpha subunit type 1 subfamily. In terms of assembly, tetramer of two alpha and two beta subunits. It depends on Mg(2+) as a cofactor.

The protein localises to the cytoplasm. The catalysed reaction is tRNA(Phe) + L-phenylalanine + ATP = L-phenylalanyl-tRNA(Phe) + AMP + diphosphate + H(+). In Lawsonia intracellularis (strain PHE/MN1-00), this protein is Phenylalanine--tRNA ligase alpha subunit.